The primary structure comprises 496 residues: Coiled-coil domain-containing protein 77 (496 aa).

Residues 1 to 42 are disordered; sequence MDFSPPHGLRGGRSPSLQDTTISSSHTQKNGGDSTPLPPINE. The segment covering 15–33 has biased composition (polar residues); sequence PSLQDTTISSSHTQKNGGD. A coiled-coil region spans residues 51 to 113; it reads RELLEYYRKK…KALSDMQVYL (63 aa). The disordered stretch occupies residues 170-208; sequence QRTVQSGDPFDRKVQRSGRAGVKQVPLKAPGKQDRTKAA. Residues 214-495 adopt a coiled-coil conformation; sequence QILLLQVEAL…IYGLENELRI (282 aa).

The protein is Coiled-coil domain-containing protein 77 (ccdc77) of Xenopus laevis (African clawed frog).